The primary structure comprises 652 residues: Probable protein phosphatase 2C 19 (652 aa).

The 253-residue stretch at 265–517 (KYVVSSMQGW…DNTTVILVLF (253 aa)) folds into the PPM-type phosphatase domain. Residues Asp-300, Gly-301, Glu-467, and Asp-508 each coordinate Mn(2+). Residues 524–567 (AVPPVDTDTDTDSHTGDDVDNNDPANEVDPTANAGSDDSNTSDE) form a disordered region.

It belongs to the PP2C family. Mg(2+) serves as cofactor. The cofactor is Mn(2+).

The enzyme catalyses O-phospho-L-seryl-[protein] + H2O = L-seryl-[protein] + phosphate. It carries out the reaction O-phospho-L-threonyl-[protein] + H2O = L-threonyl-[protein] + phosphate. The sequence is that of Probable protein phosphatase 2C 19 from Oryza sativa subsp. japonica (Rice).